The following is a 514-amino-acid chain: 2,3-bisphosphoglycerate-independent phosphoglycerate mutase (514 aa).

2 residues coordinate Mn(2+): aspartate 14 and serine 64. The active-site Phosphoserine intermediate is the serine 64. Substrate-binding positions include histidine 125, 155 to 156, arginine 187, arginine 193, 263 to 266, and lysine 336; these read RD and RADR. Residues aspartate 403, histidine 407, aspartate 444, histidine 445, and histidine 463 each contribute to the Mn(2+) site.

This sequence belongs to the BPG-independent phosphoglycerate mutase family. As to quaternary structure, monomer. Mn(2+) is required as a cofactor.

The catalysed reaction is (2R)-2-phosphoglycerate = (2R)-3-phosphoglycerate. It participates in carbohydrate degradation; glycolysis; pyruvate from D-glyceraldehyde 3-phosphate: step 3/5. Its function is as follows. Catalyzes the interconversion of 2-phosphoglycerate and 3-phosphoglycerate. This Escherichia coli O6:H1 (strain CFT073 / ATCC 700928 / UPEC) protein is 2,3-bisphosphoglycerate-independent phosphoglycerate mutase.